The chain runs to 337 residues: DNA-directed RNA polymerase subunit alpha (337 aa).

The tract at residues 1-233 is alpha N-terminal domain (alpha-NTD); the sequence is MVREEVAGST…DLFLPFLHTE (233 aa). The tract at residues 267-337 is alpha C-terminal domain (alpha-CTD); sequence IPLNCIFIDQ…LPMDLPKNKF (71 aa).

The protein belongs to the RNA polymerase alpha chain family. In plastids the minimal PEP RNA polymerase catalytic core is composed of four subunits: alpha, beta, beta', and beta''. When a (nuclear-encoded) sigma factor is associated with the core the holoenzyme is formed, which can initiate transcription.

Its subcellular location is the plastid. The protein localises to the chloroplast. It catalyses the reaction RNA(n) + a ribonucleoside 5'-triphosphate = RNA(n+1) + diphosphate. DNA-dependent RNA polymerase catalyzes the transcription of DNA into RNA using the four ribonucleoside triphosphates as substrates. This Oryza nivara (Indian wild rice) protein is DNA-directed RNA polymerase subunit alpha.